A 376-amino-acid chain; its full sequence is Transcription initiation factor IIA subunit 1 (376 aa).

A2 carries the post-translational modification N-acetylalanine. Low complexity-rich tracts occupy residues 69–79 (QVQQQHQPQQQ) and 89–105 (QAQP…TQQV). Disordered regions lie at residues 69–107 (QVQQ…QVLI), 247–266 (QAQI…AQTQ), and 274–329 (DGTG…QELF). 4 positions are modified to phosphoserine; by TAF1: S280, S281, S316, and S321. A compositionally biased stretch (acidic residues) spans 280 to 329 (SSEEDEDEEEDYDDDEEEDKEKDGAEDGQVEEEPLNSEDDVSDEEGQELF). DNA-binding residues include H343 and R344.

The protein belongs to the TFIIA subunit 1 family. TFIIA is a heterodimer of the large unprocessed subunit 1 and a small subunit gamma. It was originally believed to be a heterotrimer of an alpha (p35), a beta (p19) and a gamma subunit (p12). TFIIA forms a complex with TBP. Part of TBP-based Pol II pre-initiation complex (PIC), in which Pol II core assembles with general transcription factors and other specific initiation factors including GTF2E1, GTF2E2, GTF2F1, GTF2F2, TCEA1, ERCC2, ERCC3, GTF2H2, GTF2H3, GTF2H4, GTF2H5, GTF2A1, GTF2A2, GTF2B and TBP; this large multi-subunit PIC complex mediates DNA unwinding and targets Pol II core to the transcription start site where the first phosphodiester bond forms. In terms of processing, the alpha and beta subunits are postranslationally produced from the precursor form by TASP1. The cleavage promotes proteasomal degradation.

Its subcellular location is the nucleus. In terms of biological role, TFIIA is a component of the transcription machinery of RNA polymerase II and plays an important role in transcriptional activation. TFIIA in a complex with TBP mediates transcriptional activity. The protein is Transcription initiation factor IIA subunit 1 (GTF2A1) of Homo sapiens (Human).